A 540-amino-acid polypeptide reads, in one-letter code: CTP synthase (540 aa).

Residues 1–265 form an amidoligase domain region; that stretch reads MVRFIFITGG…DNKVLKFFNL (265 aa). Ser13 contacts CTP. Ser13 is a binding site for UTP. ATP-binding positions include 14 to 19 and Asp71; that span reads SLGKGL. Asp71 and Glu139 together coordinate Mg(2+). CTP contacts are provided by residues 146–148, 186–191, and Lys222; these read DIE and KTKPTQ. UTP is bound by residues 186-191 and Lys222; that span reads KTKPTQ. The 250-residue stretch at 290–539 folds into the Glutamine amidotransferase type-1 domain; that stretch reads RIAIIAKYHK…VEAAIKYNKN (250 aa). Gly352 is an L-glutamine binding site. Residue Cys379 is the Nucleophile; for glutamine hydrolysis of the active site. Residues 380–383, Glu403, and Arg467 each bind L-glutamine; that span reads LGMQ. Active-site residues include His512 and Glu514.

The protein belongs to the CTP synthase family. As to quaternary structure, homotetramer.

It carries out the reaction UTP + L-glutamine + ATP + H2O = CTP + L-glutamate + ADP + phosphate + 2 H(+). It catalyses the reaction L-glutamine + H2O = L-glutamate + NH4(+). The catalysed reaction is UTP + NH4(+) + ATP = CTP + ADP + phosphate + 2 H(+). It participates in pyrimidine metabolism; CTP biosynthesis via de novo pathway; CTP from UDP: step 2/2. Its activity is regulated as follows. Allosterically activated by GTP, when glutamine is the substrate; GTP has no effect on the reaction when ammonia is the substrate. The allosteric effector GTP functions by stabilizing the protein conformation that binds the tetrahedral intermediate(s) formed during glutamine hydrolysis. Inhibited by the product CTP, via allosteric rather than competitive inhibition. Its function is as follows. Catalyzes the ATP-dependent amination of UTP to CTP with either L-glutamine or ammonia as the source of nitrogen. Regulates intracellular CTP levels through interactions with the four ribonucleotide triphosphates. This is CTP synthase from Rickettsia bellii (strain RML369-C).